Here is a 340-residue protein sequence, read N- to C-terminus: Anthranilate phosphoribosyltransferase (340 aa).

Residues Gly-83, 86-87, Thr-91, 93-96, 111-119, and Ser-123 each bind 5-phospho-alpha-D-ribose 1-diphosphate; these read GD, NIST, and KHGNRSITS. Gly-83 contributes to the anthranilate binding site. Mg(2+) is bound at residue Ser-95. Asn-114 lines the anthranilate pocket. An anthranilate-binding site is contributed by Arg-169. Mg(2+) is bound by residues Asp-228 and Glu-229.

The protein belongs to the anthranilate phosphoribosyltransferase family. As to quaternary structure, homodimer. It depends on Mg(2+) as a cofactor.

The catalysed reaction is N-(5-phospho-beta-D-ribosyl)anthranilate + diphosphate = 5-phospho-alpha-D-ribose 1-diphosphate + anthranilate. The protein operates within amino-acid biosynthesis; L-tryptophan biosynthesis; L-tryptophan from chorismate: step 2/5. Its function is as follows. Catalyzes the transfer of the phosphoribosyl group of 5-phosphorylribose-1-pyrophosphate (PRPP) to anthranilate to yield N-(5'-phosphoribosyl)-anthranilate (PRA). This Solibacter usitatus (strain Ellin6076) protein is Anthranilate phosphoribosyltransferase.